A 279-amino-acid chain; its full sequence is Large ribosomal subunit protein uL2 (279 aa).

2 disordered regions span residues 32–58 (SLLT…GGGH) and 223–279 (GVAM…RKRG). 2 stretches are compositionally biased toward basic residues: residues 40 to 58 (KGGR…GGGH) and 269 to 279 (VRRRYATRKRG).

This sequence belongs to the universal ribosomal protein uL2 family. In terms of assembly, part of the 50S ribosomal subunit. Forms a bridge to the 30S subunit in the 70S ribosome.

Functionally, one of the primary rRNA binding proteins. Required for association of the 30S and 50S subunits to form the 70S ribosome, for tRNA binding and peptide bond formation. It has been suggested to have peptidyltransferase activity; this is somewhat controversial. Makes several contacts with the 16S rRNA in the 70S ribosome. The chain is Large ribosomal subunit protein uL2 from Salinispora tropica (strain ATCC BAA-916 / DSM 44818 / JCM 13857 / NBRC 105044 / CNB-440).